A 1139-amino-acid polypeptide reads, in one-letter code: Protein lin-25 (1139 aa).

A Nuclear localization signal motif is present at residues 695 to 701; it reads IKKKKDP.

As to expression, expressed in seam cells and all six vulva precursor cells (VPC). After VPC division, expression is restricted to descendants of the VPC cell lineages P5.p, P6.p and P7.p (at protein level).

It is found in the nucleus. The protein localises to the cytoplasm. In terms of biological role, participates in the inductive signaling pathway downstream of let-60 Ras and the RAF/MAP kinase cascade to regulate specification and differentiation of many cell types. Positively regulates the fate of vulval precursor cells. Required for induction of the P12 and excretory duct cell fates. In males, it is also required for proper formation of spicules. Does not function in the signaling pathway that promotes exit from pachytene. Plays a role in responses to M.nematophilum-mediated bacterial infection by promoting tail swelling and preventing constipation. The sequence is that of Protein lin-25 (lin-25) from Caenorhabditis elegans.